A 509-amino-acid chain; its full sequence is Solute carrier family 2, facilitated glucose transporter member 4 (509 aa).

Over 1 to 24 (MPSGFQQIGSEDGEPPRQRVTGTL) the chain is Cytoplasmic. The interval 7 to 13 (QIGSEDG) is interaction with SRFBP1. Phosphoserine is present on Ser-10. A helical membrane pass occupies residues 25–45 (VLAVFSAVLGSLQFGYNIGVI). Residues 46 to 81 (NAPQKVIEQSYNETWLGRQGPEGPGSIPPGTLTTLW) are Extracellular-facing. N-linked (GlcNAc...) asparagine glycosylation is present at Asn-57. A helical transmembrane segment spans residues 82-102 (ALSVAIFSVGGMISSFLIGII). Residues 103-111 (SQWLGRKRA) lie on the Cytoplasmic side of the membrane. Residues 112-132 (MLFNNALAVLGGTLMGLAKAA) traverse the membrane as a helical segment. The Extracellular segment spans residues 133–142 (ASYEMLILGR). The chain crosses the membrane as a helical span at residues 143–163 (FFIGAYSGLTSGLVPMYVGEI). The Cytoplasmic segment spans residues 164–171 (APTHLRGA). Residues 172-192 (LGTLNQLAIVTGILIAQVLGL) traverse the membrane as a helical segment. Gln-177 contributes to the D-glucose binding site. The Extracellular segment spans residues 193–200 (ESMLGTAT). The chain crosses the membrane as a helical span at residues 201–221 (LWPLLLGITVLPALLQMVLLP). Residues 222–287 (LCPESPRYLY…LLGSHTHRQP (66 aa)) are Cytoplasmic-facing. Cys-223 carries the S-palmitoyl cysteine lipid modification. The residue at position 274 (Ser-274) is a Phosphoserine; by SGK1. The helical transmembrane segment at 288 to 308 (LVIAIVLQLSQQLSGINAVFY) threads the bilayer. D-glucose is bound by residues 298–299 (QQ) and Asn-304. Residues 309-323 (YSTSIFESAGVEKPA) are Extracellular-facing. The helical transmembrane segment at 324–344 (YATIGAGVVNTVFTLVSVFLV) threads the bilayer. Asn-333 is a binding site for D-glucose. The Cytoplasmic portion of the chain corresponds to 345–353 (ERAGRRTLH). The chain crosses the membrane as a helical span at residues 354-374 (LLGLAGMCGCAILMTVALLLL). Topologically, residues 375-384 (ERVPAMSYVS) are extracellular. A helical membrane pass occupies residues 385–405 (IVAIFGFVAFFEIGPGPIPWF). Residues Glu-396 and Trp-404 each coordinate D-glucose. Over 406–417 (IVAELFSQGPRP) the chain is Cytoplasmic. A helical membrane pass occupies residues 418–438 (AAMAVAGFSNWTCNFIIGMGF). At 439-445 (QYVADAM) the chain is on the extracellular side. A helical transmembrane segment spans residues 446-466 (GPYVFLLFAVLLLGFFIFTFL). The Cytoplasmic portion of the chain corresponds to 467–509 (KVPETRGRTFDQISAVFHRTPSLLEQEVKPSTELEYLGPDEHD). Thr-486 bears the Phosphothreonine mark. Ser-488 is subject to Phosphoserine. Positions 489–490 (LL) match the Dileucine internalization motif motif.

The protein belongs to the major facilitator superfamily. Sugar transporter (TC 2.A.1.1) family. Glucose transporter subfamily. As to quaternary structure, binds to DAXX. Interacts via its N-terminus with SRFBP1. Interacts with NDUFA9. Interacts with TRARG1; the interaction is required for proper SLC2A4 recycling after insulin stimulation. Sumoylated. Post-translationally, palmitoylated. Palmitoylation by ZDHHC7 controls the insulin-dependent translocation of GLUT4 to the plasma membrane.

It is found in the cell membrane. The protein localises to the endomembrane system. Its subcellular location is the cytoplasm. It localises to the perinuclear region. The catalysed reaction is D-glucose(out) = D-glucose(in). Its function is as follows. Insulin-regulated facilitative glucose transporter, which plays a key role in removal of glucose from circulation. Response to insulin is regulated by its intracellular localization: in the absence of insulin, it is efficiently retained intracellularly within storage compartments in muscle and fat cells. Upon insulin stimulation, translocates from these compartments to the cell surface where it transports glucose from the extracellular milieu into the cell. In Bos taurus (Bovine), this protein is Solute carrier family 2, facilitated glucose transporter member 4.